We begin with the raw amino-acid sequence, 264 residues long: MEFVKLQCNICFSVAEIKNYFLQPIDRLTIIPVLELDTCKHQLCSMCIRKIRKRKKVPCPLCRVESLHFNVYSVNRNVVDVIKCSASSVAQWNKINANFDAASLASVLFEKSLLDDAEDNNANADDTMLSEAQAILKKLQVDIAEQTQLNIKQQLDLDKLQQTSVSMQEKLDKIKSDYNNMHKSFKELQLKRITTEKALKSLNDDYAKLASKNAKLSSENKVLSNKNIELIKHKNLLQNEYTTLQSYKCITNATITTNVTINVD.

The RING-type zinc-finger motif lies at 8 to 63; the sequence is CNICFSVAEIKNYFLQPIDRLTIIPVLELDTCKHQLCSMCIRKIRKRKKVPCPLCR.

It is found in the host nucleus. Plays a role in the proper expression of late and very late genes. In Autographa californica nuclear polyhedrosis virus (AcMNPV), this protein is Zinc finger protein CG30 (CG30).